Here is a 324-residue protein sequence, read N- to C-terminus: Anthranilate phosphoribosyltransferase (324 aa).

Residues Gly-72, 75-76 (GD), Thr-80, 82-85 (NVST), 99-107 (KHGNVSVTS), and Ser-111 each bind 5-phospho-alpha-D-ribose 1-diphosphate. Gly-72 contributes to the anthranilate binding site. Ser-84 contributes to the Mg(2+) binding site. Asn-102 is a binding site for anthranilate. Arg-157 provides a ligand contact to anthranilate. Mg(2+)-binding residues include Asp-215 and Glu-216.

This sequence belongs to the anthranilate phosphoribosyltransferase family. Homodimer. Mg(2+) is required as a cofactor.

It catalyses the reaction N-(5-phospho-beta-D-ribosyl)anthranilate + diphosphate = 5-phospho-alpha-D-ribose 1-diphosphate + anthranilate. It participates in amino-acid biosynthesis; L-tryptophan biosynthesis; L-tryptophan from chorismate: step 2/5. Catalyzes the transfer of the phosphoribosyl group of 5-phosphorylribose-1-pyrophosphate (PRPP) to anthranilate to yield N-(5'-phosphoribosyl)-anthranilate (PRA). In Pyrococcus furiosus (strain ATCC 43587 / DSM 3638 / JCM 8422 / Vc1), this protein is Anthranilate phosphoribosyltransferase.